Consider the following 708-residue polypeptide: DNA-directed RNA polymerase III subunit RPC5 (708 aa).

Residues 146-155 (DAKHREREAA) show a composition bias toward basic and acidic residues. Residues 146–170 (DAKHREREAANEAGDSSQDEAEDDV) form a disordered region. Serine 161 and serine 162 each carry phosphoserine. A Glycyl lysine isopeptide (Lys-Gly) (interchain with G-Cter in SUMO2) cross-link involves residue lysine 171. A Phosphoserine modification is found at serine 192. Residue tyrosine 224 is modified to Phosphotyrosine. A Glycyl lysine isopeptide (Lys-Gly) (interchain with G-Cter in SUMO2) cross-link involves residue lysine 432. The interval 485-552 (QLRVPAVPPG…DSFNGHPPQG (68 aa)) is disordered. A Glycyl lysine isopeptide (Lys-Gly) (interchain with G-Cter in SUMO1); alternate cross-link involves residue lysine 498. Residue lysine 498 forms a Glycyl lysine isopeptide (Lys-Gly) (interchain with G-Cter in SUMO2); alternate linkage. Positions 502-519 (VSEEGEEDEEQEAEEEPM) are enriched in acidic residues. Phosphoserine is present on residues serine 503 and serine 522. Residues 556-708 (TPVARELKAF…MWYLKGTVQS (153 aa)) are required for Pol III complex stability. A Glycyl lysine isopeptide (Lys-Gly) (interchain with G-Cter in SUMO2) cross-link involves residue lysine 659.

As to quaternary structure, component of the RNA polymerase III complex consisting of at least 17 subunits: a ten-subunit horseshoe-shaped catalytic core composed of POLR3A/RPC1, POLR3B/RPC2, POLR1C/RPAC1, POLR1D/RPAC2, POLR3K/RPC10, POLR2E/RPABC1, POLR2F/RPABC2, POLR2H/RPABC3, POLR2K/RPABC4 and POLR2L/RPABC5; the stalk composed of two subunits POLR3H/RPC8 and CRCP/RPC9, forming a structural mobile part that protrudes out of the core and functions primarily in transcription initiation; and additional subunits homologous to general transcription factors of the RNA polymerase II machinery, POLR3D/RPC4-POLR3E/RPC5 heterodimer and POLR3/CRPC3-POLR3F/RPC6-POLR3G/RPC7 heterotrimer.

The protein resides in the nucleus. Functionally, DNA-dependent RNA polymerase catalyzes the transcription of DNA into RNA using the four ribonucleoside triphosphates as substrates. Specific peripheric component of RNA polymerase III (Pol III) which synthesizes small non-coding RNAs including 5S rRNA, snRNAs, tRNAs and miRNAs from at least 500 distinct genomic loci. Assembles with POLR3D/RPC4 forming a subcomplex that binds the Pol III core. Enables recruitment of Pol III at transcription initiation site and drives transcription initiation from both type 2 and type 3 DNA promoters. Required for efficient transcription termination and reinitiation. Plays a key role in sensing and limiting infection by intracellular bacteria and DNA viruses. Acts as a nuclear and cytosolic DNA sensor involved in innate immune response. Can sense non-self dsDNA that serves as template for transcription into dsRNA. The non-self RNA polymerase III transcripts, such as Epstein-Barr virus-encoded RNAs (EBERs) induce type I interferon and NF-kappa-B through the RIG-I pathway. This chain is DNA-directed RNA polymerase III subunit RPC5, found in Homo sapiens (Human).